Reading from the N-terminus, the 617-residue chain is Chaperone protein HscA homolog (617 aa).

Residues 1 to 23 form a disordered region; it reads MALLQIAEPGQSSAPHEHKRAAG.

The protein belongs to the heat shock protein 70 family.

Its function is as follows. Chaperone involved in the maturation of iron-sulfur cluster-containing proteins. Has a low intrinsic ATPase activity which is markedly stimulated by HscB. The sequence is that of Chaperone protein HscA homolog from Vibrio vulnificus (strain YJ016).